The following is a 314-amino-acid chain: Ribosomal RNA small subunit methyltransferase H 2 (314 aa).

Residues 33–35 (AGH), aspartate 53, tyrosine 80, aspartate 101, and glutamine 108 contribute to the S-adenosyl-L-methionine site. The disordered stretch occupies residues 293-314 (KELEENSRSKSAKLRVFEKNDL).

The protein belongs to the methyltransferase superfamily. RsmH family.

It localises to the cytoplasm. It carries out the reaction cytidine(1402) in 16S rRNA + S-adenosyl-L-methionine = N(4)-methylcytidine(1402) in 16S rRNA + S-adenosyl-L-homocysteine + H(+). Specifically methylates the N4 position of cytidine in position 1402 (C1402) of 16S rRNA. The sequence is that of Ribosomal RNA small subunit methyltransferase H 2 from Agathobacter rectalis (strain ATCC 33656 / DSM 3377 / JCM 17463 / KCTC 5835 / VPI 0990) (Eubacterium rectale).